A 503-amino-acid polypeptide reads, in one-letter code: Na(+)-translocating NADH-quinone reductase subunit B (503 aa).

Helical transmembrane passes span 55–75 (MMLV…NSGL), 85–105 (PQIM…SFVS), 120–142 (IFLP…FAII), 161–181 (ILPP…GVVI), and 186–206 (FGGT…FLFF). Thr-248 is subject to FMN phosphoryl threonine. 5 helical membrane passes run 361–381 (TSTV…IASW), 387–407 (FGLS…LAAG), 417–437 (FFIP…LVFM), 452–472 (WFYG…NPAY), and 475–495 (GVML…RIAL).

Belongs to the NqrB/RnfD family. In terms of assembly, composed of six subunits; NqrA, NqrB, NqrC, NqrD, NqrE and NqrF. FMN is required as a cofactor.

It localises to the cell inner membrane. The catalysed reaction is a ubiquinone + n Na(+)(in) + NADH + H(+) = a ubiquinol + n Na(+)(out) + NAD(+). NQR complex catalyzes the reduction of ubiquinone-1 to ubiquinol by two successive reactions, coupled with the transport of Na(+) ions from the cytoplasm to the periplasm. NqrA to NqrE are probably involved in the second step, the conversion of ubisemiquinone to ubiquinol. The protein is Na(+)-translocating NADH-quinone reductase subunit B of Chlamydia muridarum (strain MoPn / Nigg).